A 282-amino-acid chain; its full sequence is MSKGWRKLFVSRGDGTKNSLKKTLKVPEVRSPLLTNFHRWAGKERVLKLTDKEQVTEAVGNSSWDLSKNLFANLLASPMRSDKASRFKFPRDLLIQMKLVQTGNENPGKLATLMPLINMKSGKSSSYVANSLKIFKGKKPGLGQLVPTAVNDSGIANISLSDIVLDKSLFTEKHQEELLQCIENCMTQLVDRRKSSVPVVVEDWDVVLTYDHNNDNDIELVRLKQLPKDPTVIILNLKVVENDSIRALINDKLKNHEVGVVLKFLKDERLIRLVYSLLNFSK.

It belongs to the RRG8 family.

The protein resides in the mitochondrion. Its function is as follows. Required for respiratory activity and maintenance and expression of the mitochondrial genome. This Kluyveromyces lactis (strain ATCC 8585 / CBS 2359 / DSM 70799 / NBRC 1267 / NRRL Y-1140 / WM37) (Yeast) protein is Required for respiratory growth protein 8, mitochondrial (RRG8).